Here is a 406-residue protein sequence, read N- to C-terminus: Acetylornithine/succinyldiaminopimelate aminotransferase (406 aa).

Pyridoxal 5'-phosphate is bound by residues 108-109 (GT) and Phe141. Residue Arg144 participates in N(2)-acetyl-L-ornithine binding. Residue 226–229 (DEVQ) coordinates pyridoxal 5'-phosphate. Lys255 is subject to N6-(pyridoxal phosphate)lysine. Ser283 provides a ligand contact to N(2)-acetyl-L-ornithine. Residue Thr284 coordinates pyridoxal 5'-phosphate.

Belongs to the class-III pyridoxal-phosphate-dependent aminotransferase family. ArgD subfamily. Homodimer. Pyridoxal 5'-phosphate serves as cofactor.

The protein localises to the cytoplasm. The catalysed reaction is N(2)-acetyl-L-ornithine + 2-oxoglutarate = N-acetyl-L-glutamate 5-semialdehyde + L-glutamate. It carries out the reaction N-succinyl-(2S,6S)-2,6-diaminopimelate + 2-oxoglutarate = (S)-2-succinylamino-6-oxoheptanedioate + L-glutamate. It functions in the pathway amino-acid biosynthesis; L-arginine biosynthesis; N(2)-acetyl-L-ornithine from L-glutamate: step 4/4. It participates in amino-acid biosynthesis; L-lysine biosynthesis via DAP pathway; LL-2,6-diaminopimelate from (S)-tetrahydrodipicolinate (succinylase route): step 2/3. Functionally, involved in both the arginine and lysine biosynthetic pathways. This is Acetylornithine/succinyldiaminopimelate aminotransferase from Escherichia coli O6:H1 (strain CFT073 / ATCC 700928 / UPEC).